Here is a 594-residue protein sequence, read N- to C-terminus: Putative 3,4-dihydroxy-2-butanone kinase (594 aa).

The DhaK domain maps to 11 to 341 (DPNDVVTEFI…LDAPTKAPNW (331 aa)). Substrate-binding positions include 62–65 (GSGH), K113, and D118. H226 functions as the Tele-hemiaminal-histidine intermediate in the catalytic mechanism. Residues 339–358 (PNWPVGAEGNRPPAKIPVPL) are disordered. One can recognise a DhaL domain in the interval 381-585 (HILETAIEAA…AAAWYRAAAL (205 aa)). ATP is bound by residues 410 to 413 (DGDC), 455 to 456 (TS), G499, 507 to 508 (TL), and 570 to 572 (DPG).

It belongs to the dihydroxyacetone kinase (DAK) family.

The chain is Putative 3,4-dihydroxy-2-butanone kinase (DHBK) from Solanum lycopersicum (Tomato).